The chain runs to 283 residues: Gap junction alpha-6 protein (283 aa).

The Cytoplasmic segment spans residues Met-1 to Lys-23. A helical transmembrane segment spans residues Val-24–Ile-41. The Extracellular segment spans residues Glu-42–Arg-76. The helical transmembrane segment at Leu-77 to Val-99 threads the bilayer. Residues Val-100 to Arg-150 are Cytoplasmic-facing. A helical transmembrane segment spans residues Leu-151–Gln-173. At Trp-174–Ile-208 the chain is on the extracellular side. The helical transmembrane segment at Phe-209 to Val-231 threads the bilayer. At Leu-232–Ile-283 the chain is on the cytoplasmic side.

This sequence belongs to the connexin family. Alpha-type (group II) subfamily. As to quaternary structure, a connexon is composed of a hexamer of connexins.

The protein localises to the cell membrane. It localises to the cell junction. It is found in the gap junction. Functionally, one gap junction consists of a cluster of closely packed pairs of transmembrane channels, the connexons, through which materials of low MW diffuse from one cell to a neighboring cell. The polypeptide is Gap junction alpha-6 protein (Gja6) (Mus musculus (Mouse)).